The primary structure comprises 105 residues: Protamine-2 (105 aa).

Positions 1–74 are disordered; sequence MVRYRMRSPS…RRSCRRRRRH (74 aa). Ser-8, Ser-10, and Ser-33 each carry phosphoserine. Residues 33–42 are compositionally biased toward basic and acidic residues; sequence SPERVEDYGR. Residues 43–74 show a composition bias toward basic residues; that stretch reads THRGHHRHRRCSRKRLHRIHKRRRSCRRRRRH.

Belongs to the protamine P2 family. Interacts with TDRP. Post-translationally, proteolytic processing into mature chains is required for histone eviction during spermatogenesis. Transition proteins (TNP1 and TNP2) are required for processing. As to expression, testis.

The protein resides in the nucleus. The protein localises to the chromosome. Functionally, protamines substitute for histones in the chromatin of sperm during the haploid phase of spermatogenesis. They compact sperm DNA into a highly condensed, stable and inactive complex. The polypeptide is Protamine-2 (Prm2) (Rattus fuscipes (Bush rat)).